Here is a 354-residue protein sequence, read N- to C-terminus: Replication factor C subunit 3 (354 aa).

Gly-41–Lys-48 lines the ATP pocket.

The protein belongs to the activator 1 small subunits family. As to quaternary structure, heterotetramer of subunits RFC2, RFC3, RFC4 and RFC5 that can form a complex with RFC1.

It is found in the nucleus. Functionally, may be involved in DNA replication and thus regulate cell proliferation. The polypeptide is Replication factor C subunit 3 (RFC3) (Arabidopsis thaliana (Mouse-ear cress)).